The primary structure comprises 329 residues: DNA-directed RNA polymerase subunit alpha (329 aa).

Residues 1 to 235 (MQNSIIGFLK…EQLEAFVDLR (235 aa)) are alpha N-terminal domain (alpha-NTD). Residues 249–329 (FEPILLRPVD…KWPPSSILEE (81 aa)) are alpha C-terminal domain (alpha-CTD).

The protein belongs to the RNA polymerase alpha chain family. In terms of assembly, homodimer. The RNAP catalytic core consists of 2 alpha, 1 beta, 1 beta' and 1 omega subunit. When a sigma factor is associated with the core the holoenzyme is formed, which can initiate transcription.

It carries out the reaction RNA(n) + a ribonucleoside 5'-triphosphate = RNA(n+1) + diphosphate. In terms of biological role, DNA-dependent RNA polymerase catalyzes the transcription of DNA into RNA using the four ribonucleoside triphosphates as substrates. The polypeptide is DNA-directed RNA polymerase subunit alpha (Buchnera aphidicola subsp. Schizaphis graminum (strain Sg)).